The chain runs to 343 residues: Small ribosomal subunit biogenesis GTPase RsgA (343 aa).

The CP-type G domain maps to arginine 116–phenylalanine 275. GTP contacts are provided by residues asparagine 163–aspartate 166 and glycine 217–serine 225. Residues cysteine 299, cysteine 304, histidine 306, and cysteine 312 each contribute to the Zn(2+) site.

The protein belongs to the TRAFAC class YlqF/YawG GTPase family. RsgA subfamily. Monomer. Associates with 30S ribosomal subunit, binds 16S rRNA. It depends on Zn(2+) as a cofactor.

It localises to the cytoplasm. Its function is as follows. One of several proteins that assist in the late maturation steps of the functional core of the 30S ribosomal subunit. Helps release RbfA from mature subunits. May play a role in the assembly of ribosomal proteins into the subunit. Circularly permuted GTPase that catalyzes slow GTP hydrolysis, GTPase activity is stimulated by the 30S ribosomal subunit. This is Small ribosomal subunit biogenesis GTPase RsgA from Azotobacter vinelandii (strain DJ / ATCC BAA-1303).